Here is a 537-residue protein sequence, read N- to C-terminus: DEAD-box ATP-dependent RNA helicase 5 (537 aa).

The interval 1–97 is disordered; it reads MAGQKQELPV…EDLGEGESEQ (97 aa). A coiled-coil region spans residues 22–80; sequence TNKKKKKSKKNKHTEENHEVEEVPQEVTNGVEEELSNKEKKKKRKREEKESEKNKKKDV. The segment covering 23–33 has biased composition (basic residues); that stretch reads NKKKKKSKKNK. Residues 68–87 are compositionally biased toward basic and acidic residues; it reads EEKESEKNKKKDVPEKKLEA. The Q motif motif lies at 116–142; it reads KTFAESNLPENVLDCCKTFEKPSPIQS. A Helicase ATP-binding domain is found at 145–324; sequence WPFLLDGRDL…QEFMDPNPIK (180 aa). 158–165 provides a ligand contact to ATP; the sequence is AKTGSGKT. A DEAD box motif is present at residues 272–275; it reads DEAD. Residues 349–500 enclose the Helicase C-terminal domain; sequence ARDQRLIALL…VVPADLLKFG (152 aa). The residue at position 533 (serine 533) is a Phosphoserine.

It belongs to the DEAD box helicase family. DDX5/DBP2 subfamily.

The protein localises to the nucleus. The protein resides in the nucleolus. It carries out the reaction ATP + H2O = ADP + phosphate + H(+). ATP-dependent RNA helicase required for 60S ribosomal subunit synthesis. Involved in efficient pre-rRNA processing, predominantly at site A3, which is necessary for the normal formation of 25S and 5.8S rRNAs. This is DEAD-box ATP-dependent RNA helicase 5 (RH5) from Arabidopsis thaliana (Mouse-ear cress).